The following is a 360-amino-acid chain: MAAERGAGQQQSQEMMEVDRRVESEESGDEEGKKQNSGMVADLSAHSLKDGEERGDEDPEEGQELPVDMETISLDRDAEDVDLNHYRIGKIEGFEVLKKVKTLCLRQNLIKCIENLEGLQSLRELDLYDNQIRRIENLDALTELEVLDISFNLLRNIEGIDKLTRLKKLFLVNNKINKIENISSLHQLQMLELGSNRIRAIENIDTLTNLESLFLGKNKITKLQNLDALTNLTVLSMQSNRLTKIEGLQSLVNLRELYLSHNGIEVIEGLDNNNKLTMLDIASNRIKKIENVSHLTELQEFWMNDNLLDCWSDLDELKGARSLETVYLERNPLQRDPQYRRKIMLALPSVRQIDATFVRF.

Residues 1-65 form a disordered region; the sequence is MAAERGAGQQ…DEDPEEGQEL (65 aa). Alanine 2 bears the N-acetylalanine mark. Phosphoserine is present on residues serine 12, serine 24, serine 27, serine 44, and serine 47. Positions 17-34 are enriched in basic and acidic residues; that stretch reads EVDRRVESEESGDEEGKK. The span at 53–63 shows a compositional bias: acidic residues; it reads ERGDEDPEEGQ. 11 LRR repeats span residues 77–98, 99–120, 121–142, 143–164, 165–186, 187–208, 209–230, 231–252, 253–274, 275–296, and 297–318; these read DAED…EVLK, KVKT…EGLQ, SLRE…DALT, ELEV…DKLT, RLKK…SSLH, QLQM…DTLT, NLES…DALT, NLTV…QSLV, NLRE…DNNN, KLTM…SHLT, and ELQE…DELK. Phosphoserine is present on serine 322. Positions 331–360 constitute an LRRCT domain; it reads NPLQRDPQYRRKIMLALPSVRQIDATFVRF.

The protein belongs to the SDS22 family. In terms of assembly, interacts with PPP1CA, PPP1CB and PPP1CC/PPP1G. Interacts with PPP1CC isoform 2 in motile caudal epididymal spermatozoa. As to expression, expressed in epididymal spermatozoa including the principal piece of the flagellum and the head-neck junction.

The protein localises to the nucleus. Regulatory subunit of protein phosphatase 1. Inactivates the PPP1CC isoform 2 during epididymal sperm maturation. In Bos taurus (Bovine), this protein is Protein phosphatase 1 regulatory subunit 7 (PPP1R7).